A 386-amino-acid chain; its full sequence is Chorismate synthase (386 aa).

Residues Arg45 and Arg51 each coordinate NADP(+). FMN contacts are provided by residues 131–133 (RTS), 251–252 (QG), Ser294, 309–313 (KPIPS), and Arg335.

It belongs to the chorismate synthase family. As to quaternary structure, homotetramer. FMNH2 is required as a cofactor.

It catalyses the reaction 5-O-(1-carboxyvinyl)-3-phosphoshikimate = chorismate + phosphate. The protein operates within metabolic intermediate biosynthesis; chorismate biosynthesis; chorismate from D-erythrose 4-phosphate and phosphoenolpyruvate: step 7/7. Catalyzes the anti-1,4-elimination of the C-3 phosphate and the C-6 proR hydrogen from 5-enolpyruvylshikimate-3-phosphate (EPSP) to yield chorismate, which is the branch point compound that serves as the starting substrate for the three terminal pathways of aromatic amino acid biosynthesis. This reaction introduces a second double bond into the aromatic ring system. The protein is Chorismate synthase of Clostridium tetani (strain Massachusetts / E88).